Reading from the N-terminus, the 242-residue chain is Putative ABC transporter ATP-binding protein TTE0246 (242 aa).

The ABC transporter domain maps to Phe5–Ile242. Gly38–Ser45 is an ATP binding site.

It belongs to the ABC transporter superfamily.

It is found in the cell membrane. Functionally, probably part of an ABC transporter complex. Responsible for energy coupling to the transport system. The chain is Putative ABC transporter ATP-binding protein TTE0246 from Caldanaerobacter subterraneus subsp. tengcongensis (strain DSM 15242 / JCM 11007 / NBRC 100824 / MB4) (Thermoanaerobacter tengcongensis).